We begin with the raw amino-acid sequence, 300 residues long: Peroxisomal 2,4-dienoyl-CoA reductase [(3E)-enoyl-CoA-producing] (300 aa).

NADP(+) is bound by residues 42–47 (GGGSGI), 67–71 (RNLEK), and Asp-93. Residue Arg-67 participates in substrate binding. Substrate-binding positions include Arg-95, Phe-125, and 133–135 (SFN). NADP(+) is bound by residues Lys-189 and 215–221 (PGPISGT). A substrate-binding site is contributed by Arg-226. Residues 298–300 (AKL) carry the Microbody targeting signal motif.

Belongs to the short-chain dehydrogenases/reductases (SDR) family. 2,4-dienoyl-CoA reductase subfamily. As to quaternary structure, monomer, dimer and oligomer.

The protein resides in the peroxisome. It catalyses the reaction a (2E,4Z)-dienoyl-CoA + NADPH + H(+) = a 4,5-saturated-(3E)-enoyl-CoA + NADP(+). The enzyme catalyses a (2E,4E)-dienoyl-CoA + NADPH + H(+) = a 4,5-saturated-(3E)-enoyl-CoA + NADP(+). It carries out the reaction (2E,4E)-hexadienoyl-CoA + NADPH + H(+) = (3E)-hexenoyl-CoA + NADP(+). The catalysed reaction is (2E,4E)-decadienoyl-CoA + NADPH + H(+) = (3E)-decenoyl-CoA + NADP(+). It catalyses the reaction (2E,4Z,7Z,10Z,13Z,16Z,19Z)-docosaheptaenoyl-CoA + NADPH + H(+) = (3E,7Z,10Z,13Z,16Z,19Z)-docosahexaenoyl-CoA + NADP(+). In terms of biological role, auxiliary enzyme of beta-oxidation. Participates in the degradation of unsaturated fatty enoyl-CoA esters having double bonds in both even- and odd-numbered positions in peroxisome. Catalyzes the NADP-dependent reduction of 2,4-dienoyl-CoA to yield trans-3-enoyl-CoA. This is Peroxisomal 2,4-dienoyl-CoA reductase [(3E)-enoyl-CoA-producing] (decr2) from Danio rerio (Zebrafish).